We begin with the raw amino-acid sequence, 99 residues long: Protein Frey (99 aa).

The helical transmembrane segment at 13–29 threads the bilayer; sequence AGLSLFALYLVLAAALL. The tract at residues 64–90 is disordered; it reads RPKHPWPRGPRPLLSRAQQRKRDGPDM.

In terms of assembly, interacts with SPPL2C (via active sites); the interaction stabilizes FREY1 protein and inhibits SPPL2C proteolytic activity. Interacts with IZUMO1; the interaction retains IZUMO1 at the endoplasmic reticulum membrane and coordinates IZUMO1 complex assembly.

It localises to the endoplasmic reticulum membrane. Key regulator for male fertility expressed transiently in round spermatids where it recruits IZUMO1 at the endoplasmic reticulum (ER) membrane and coordinates the oolemmal binding multimeric complex (IZUMO1 complex) assembly. Upon complete assembly of the IZUMO1 complex, its ER retention is released, facilitating IZUMO1 complex export to the acrosome. Through the interaction with SPPL2C, inhibits its intramembrane protease activity directly accessing the catalytic center of an I-CLiP. The protein is Protein Frey (FREY1) of Bos taurus (Bovine).